A 187-amino-acid chain; its full sequence is Apolipophorin-3 (187 aa).

The first 17 residues, 1-17 (MAAKFIILLALFALSQA), serve as a signal peptide directing secretion. Residues 18–22 (SVVRR) constitute a propeptide that is removed on maturation.

The protein belongs to the insect apolipophorin-3 family. As to quaternary structure, equilibrium between a soluble monomer and a bound lipoprotein form. Apolipophorin-3 associates with lipophorin during lipid loading until each particle contains 9 or 14 molecules of apolipophorin-3. In terms of tissue distribution, hemolymph.

Its subcellular location is the secreted. Its function is as follows. Assists in the loading of diacylglycerol, generated from triacylglycerol stores in the fat body through the action of adipokinetic hormone, into lipophorin, the hemolymph lipoprotein. It increases the lipid carrying capacity of lipophorin by covering the expanding hydrophobic surface resulting from diacylglycerol uptake. It thus plays a critical role in the transport of lipids during flight in several species of insects. This chain is Apolipophorin-3, found in Hyphantria cunea (Fall webworm moth).